Here is a 198-residue protein sequence, read N- to C-terminus: Glycerol-3-phosphate acyltransferase 2 (198 aa).

4 consecutive transmembrane segments (helical) span residues 4-24 (TYLLFIVAYLLGSIPFALVVG), 71-91 (LPIIFALDIHPLWFGLAAVLG), 113-133 (LLCYSPVVFAILAVVFFSLLF), and 147-167 (VVAVIASIVSGDKIFIIAMCL).

Belongs to the PlsY family. In terms of assembly, probably interacts with PlsX.

The protein resides in the cell membrane. It carries out the reaction an acyl phosphate + sn-glycerol 3-phosphate = a 1-acyl-sn-glycero-3-phosphate + phosphate. The protein operates within lipid metabolism; phospholipid metabolism. In terms of biological role, catalyzes the transfer of an acyl group from acyl-phosphate (acyl-PO(4)) to glycerol-3-phosphate (G3P) to form lysophosphatidic acid (LPA). This enzyme utilizes acyl-phosphate as fatty acyl donor, but not acyl-CoA or acyl-ACP. This is Glycerol-3-phosphate acyltransferase 2 from Bacillus cereus (strain ATCC 10987 / NRS 248).